Reading from the N-terminus, the 153-residue chain is Putative nuclear shuttle protein (153 aa).

It belongs to the nanoviridae nuclear shuttle protein family.

Its subcellular location is the host nucleus. The protein resides in the host cytoplasm. Its function is as follows. Putative nuclear shuttle protein. This Cicer arietinum (Chickpea) protein is Putative nuclear shuttle protein (DNA-N).